Here is a 366-residue protein sequence, read N- to C-terminus: MSASLKRTPLADAHVAAGARMVDFGGWDMPLAYGSQLEEHHAVRRDAGMFDVSHMLNVDVTGPDATAFLRRLVANDVARLTVPGKALYSCMLNPQGGIIDDLIVYFFAADQWRVVVNAATADKDVAWMQRVAAAGSYDVAIAPRRDLAMVAVQGPNARARVWAARPAWQAATEPLTPFVAAQVADDTLVARTGYTGEDGFEIVLPADQVVALWNDLLAQGVRPCGLGARDTLRLEAGMNLYGQDMDELTQPDQAGLTWTVSLKDPERRFVGRDALEQFAAPRGFVGLKLQERGVMRAHMAVYTPLGEGEITSGTMSPTLGVSVAFARVPQGVQPGQTVEVDIRGKRVPALVCKLPFVRHGKAVEHS.

This sequence belongs to the GcvT family. The glycine cleavage system is composed of four proteins: P, T, L and H.

The catalysed reaction is N(6)-[(R)-S(8)-aminomethyldihydrolipoyl]-L-lysyl-[protein] + (6S)-5,6,7,8-tetrahydrofolate = N(6)-[(R)-dihydrolipoyl]-L-lysyl-[protein] + (6R)-5,10-methylene-5,6,7,8-tetrahydrofolate + NH4(+). Functionally, the glycine cleavage system catalyzes the degradation of glycine. The chain is Aminomethyltransferase from Bordetella petrii (strain ATCC BAA-461 / DSM 12804 / CCUG 43448).